The chain runs to 194 residues: Cytochrome c oxidase assembly protein CtaG (194 aa).

Residues 1 to 12 (MALRGPAKTVAQ) are Cytoplasmic-facing. Residues 13 to 35 (TVSVVIFMGALAWASVPLYDWFC) traverse the membrane as a helical; Signal-anchor for type II membrane protein segment. Residues 36–194 (RVTGFGGVTG…IEENSDTSLN (159 aa)) are Periplasmic-facing.

Belongs to the COX11/CtaG family.

The protein localises to the cell inner membrane. Its function is as follows. Exerts its effect at some terminal stage of cytochrome c oxidase synthesis, probably by being involved in the insertion of the copper B into subunit I. The sequence is that of Cytochrome c oxidase assembly protein CtaG from Roseobacter denitrificans (strain ATCC 33942 / OCh 114) (Erythrobacter sp. (strain OCh 114)).